A 37-amino-acid chain; its full sequence is uncharacterized protein (37 aa).

It belongs to the poxviridae A56.5 protein family.

This is an uncharacterized protein from Vaccinia virus (strain Western Reserve) (VACV).